Consider the following 488-residue polypeptide: Leucine-rich repeat-containing protein 74A (488 aa).

8 LRR repeats span residues Ala134–Glu155, Tyr162–Ser182, Ser191–Gln212, Gln219–Gly239, Gly247–Asn268, Thr275–Glu296, Cys303–Lys324, and Ser331–Ile351.

The protein is Leucine-rich repeat-containing protein 74A of Homo sapiens (Human).